A 96-amino-acid chain; its full sequence is Seed trypsin/chymotrypsin inhibitor IVA (96 aa).

Residues 1 to 10 form the signal peptide; it reads LSFAANVVNA. Positions 11-24 are excised as a propeptide; the sequence is RFDSTSFITQVLSN. 7 disulfides stabilise this stretch: Cys32/Cys85, Cys33/Cys48, Cys36/Cys81, Cys38/Cys46, Cys55/Cys62, Cys59/Cys74, and Cys64/Cys72. The propeptide at 88–96 is removed in PSTI I; it reads SEVEEVIKN.

Belongs to the Bowman-Birk serine protease inhibitor family. As to expression, seed.

In terms of biological role, inhibitor of trypsin and of chymotrypsin. May function as a natural phytochemical defense against predators. The sequence is that of Seed trypsin/chymotrypsin inhibitor IVA (TI1236) from Pisum sativum (Garden pea).